The sequence spans 130 residues: MPNNYRLAKVSSLLKKEITLILQNDLENDLIRDHFVNISKIDLSGDLQHCKIYITSTAEEKVRKEIVENLNTAKSSIRHSLGKRIEMRRVPEIIFKDDVVLDKGLSVLKLLDELKNKNQNNNVEEKDAKS.

The protein belongs to the RbfA family. Monomer. Binds 30S ribosomal subunits, but not 50S ribosomal subunits or 70S ribosomes.

The protein localises to the cytoplasm. Functionally, one of several proteins that assist in the late maturation steps of the functional core of the 30S ribosomal subunit. Associates with free 30S ribosomal subunits (but not with 30S subunits that are part of 70S ribosomes or polysomes). Required for efficient processing of 16S rRNA. May interact with the 5'-terminal helix region of 16S rRNA. In Prochlorococcus marinus (strain MIT 9301), this protein is Ribosome-binding factor A.